Consider the following 194-residue polypeptide: Flagellar transcriptional regulator FlhC (194 aa).

Zn(2+)-binding residues include Cys139, Cys142, Cys159, and Cys162.

This sequence belongs to the FlhC family. Heterohexamer composed of two FlhC and four FlhD subunits. Each FlhC binds a FlhD dimer, forming a heterotrimer, and a hexamer assembles by dimerization of two heterotrimers. The cofactor is Zn(2+).

It localises to the cytoplasm. Its function is as follows. Functions in complex with FlhD as a master transcriptional regulator that regulates transcription of several flagellar and non-flagellar operons by binding to their promoter region. Activates expression of class 2 flagellar genes, including fliA, which is a flagellum-specific sigma factor that turns on the class 3 genes. Also regulates genes whose products function in a variety of physiological pathways. This Serratia marcescens protein is Flagellar transcriptional regulator FlhC.